A 251-amino-acid chain; its full sequence is HTH-type transcriptional regulator UlaR (251 aa).

One can recognise an HTH deoR-type domain in the interval 3-58 (EAQRHQILLEMLAQLGFVTVEKVVERLGISPATARRDINKLDESGKLKKVRNGAEA). A DNA-binding region (H-T-H motif) is located at residues 20-39 (VTVEKVVERLGISPATARRD).

It localises to the cytoplasm. Represses ulaG and the ulaABCDEF operon. The protein is HTH-type transcriptional regulator UlaR of Shigella dysenteriae serotype 1 (strain Sd197).